The sequence spans 371 residues: dTDP-4-amino-4,6-dideoxy-D-glucose transaminase (371 aa).

Residue lysine 186 is modified to N6-(pyridoxal phosphate)lysine.

The protein belongs to the DegT/DnrJ/EryC1 family. Pyridoxal 5'-phosphate serves as cofactor.

The enzyme catalyses dTDP-4-amino-4,6-dideoxy-D-glucose + 2-oxoglutarate = dTDP-4-dehydro-6-deoxy-alpha-D-glucose + L-glutamate. The protein operates within bacterial outer membrane biogenesis; lipopolysaccharide biosynthesis. Functionally, catalyzes the conversion of dTDP-4-dehydro-6-deoxy-D-glucose (dTDP-D-Glc4O) to dTDP-4-amino-4,6-dideoxy-D-glucose (dTDP-D-Qui4N). This is dTDP-4-amino-4,6-dideoxy-D-glucose transaminase (vioA) from Escherichia coli.